A 345-amino-acid chain; its full sequence is Beta-2-glycoprotein 1 (345 aa).

An N-terminal signal peptide occupies residues 1 to 19; the sequence is MISPVLILFSSFLCHVAIA. Sushi domains are found at residues 21-81, 82-139, 140-202, and 203-262; these read RTCP…KCTP, RVCP…VCAP, IICP…ECRE, and VKCP…SCKA. 11 cysteine pairs are disulfide-bonded: C23/C66, C51/C79, C84/C124, C110/C137, C142/C188, C174/C200, C205/C248, C234/C260, C264/C315, C300/C325, and C307/C345. Residue T33 is glycosylated (O-linked (GalNAc...) threonine). O-linked (GalNAc...) threonine glycosylation is present at T149. N162 carries N-linked (GlcNAc...) (complex) asparagine glycosylation. N183 and N193 each carry an N-linked (GlcNAc...) asparagine glycan. N253 carries an N-linked (GlcNAc...) asparagine glycan. Residues 263-345 form a sushi-like region; it reads SCKVPVKKAT…KTDASDVKPC (83 aa).

In terms of processing, N- and O-glycosylated. PubMed:6587378 also reports glycosylation on 'Asn-188' for their allele. Expressed by the liver and secreted in plasma.

The protein resides in the secreted. Its function is as follows. Binds to various kinds of negatively charged substances such as heparin, phospholipids, and dextran sulfate. May prevent activation of the intrinsic blood coagulation cascade by binding to phospholipids on the surface of damaged cells. The protein is Beta-2-glycoprotein 1 (APOH) of Homo sapiens (Human).